We begin with the raw amino-acid sequence, 322 residues long: Large ribosomal subunit protein uL10 (322 aa).

The disordered stretch occupies residues 294–322 (APAAAAKAEKEEEPAEESDDEMGFGLFDE). The segment covering 304 to 322 (EEEPAEESDDEMGFGLFDE) has biased composition (acidic residues).

Belongs to the universal ribosomal protein uL10 family. P0 forms a pentameric complex by interaction with dimers of P1 and P2. In terms of processing, phosphorylated.

Ribosomal protein P0 is the functional equivalent of E.coli protein L10. The sequence is that of Large ribosomal subunit protein uL10 from Lupinus luteus (European yellow lupine).